A 669-amino-acid chain; its full sequence is Dymeclin (669 aa).

Gly2 carries the N-myristoyl glycine lipid modification.

This sequence belongs to the dymeclin family. Post-translationally, myristoylated in vitro; myristoylation is not essential for protein targeting to Golgi compartment.

The protein resides in the cytoplasm. It is found in the golgi apparatus. Its function is as follows. Necessary for correct organization of Golgi apparatus. This Gallus gallus (Chicken) protein is Dymeclin (DYM).